A 160-amino-acid polypeptide reads, in one-letter code: Nucleotide-binding protein AHA_1129 (160 aa).

It belongs to the YajQ family.

In terms of biological role, nucleotide-binding protein. This is Nucleotide-binding protein AHA_1129 from Aeromonas hydrophila subsp. hydrophila (strain ATCC 7966 / DSM 30187 / BCRC 13018 / CCUG 14551 / JCM 1027 / KCTC 2358 / NCIMB 9240 / NCTC 8049).